A 261-amino-acid polypeptide reads, in one-letter code: Hydroxyethylthiazole kinase (261 aa).

Residue Met38 coordinates substrate. Residues Arg114 and Thr159 each coordinate ATP. Gly186 is a substrate binding site.

The protein belongs to the Thz kinase family. Mg(2+) is required as a cofactor.

It catalyses the reaction 5-(2-hydroxyethyl)-4-methylthiazole + ATP = 4-methyl-5-(2-phosphooxyethyl)-thiazole + ADP + H(+). Its pathway is cofactor biosynthesis; thiamine diphosphate biosynthesis; 4-methyl-5-(2-phosphoethyl)-thiazole from 5-(2-hydroxyethyl)-4-methylthiazole: step 1/1. Its function is as follows. Catalyzes the phosphorylation of the hydroxyl group of 4-methyl-5-beta-hydroxyethylthiazole (THZ). This is Hydroxyethylthiazole kinase from Streptococcus suis (strain 05ZYH33).